The chain runs to 70 residues: Conotoxin ba3a (70 aa).

Residues 1–20 form the signal peptide; it reads MLKIGVMLSIILVLFPLATL. Residues 21-55 constitute a propeptide that is removed on maturation; the sequence is QLVAERPAAERYAENKQDLNPDERRNYLVDLGVER.

As to expression, expressed by the venom duct.

The protein resides in the secreted. This Conus bayani (Bayan's cone) protein is Conotoxin ba3a.